The following is a 262-amino-acid chain: Acyl-[acyl-carrier-protein]--UDP-N-acetylglucosamine O-acyltransferase (262 aa).

This sequence belongs to the transferase hexapeptide repeat family. LpxA subfamily. Homotrimer.

The protein localises to the cytoplasm. The catalysed reaction is a (3R)-hydroxyacyl-[ACP] + UDP-N-acetyl-alpha-D-glucosamine = a UDP-3-O-[(3R)-3-hydroxyacyl]-N-acetyl-alpha-D-glucosamine + holo-[ACP]. Its pathway is glycolipid biosynthesis; lipid IV(A) biosynthesis; lipid IV(A) from (3R)-3-hydroxytetradecanoyl-[acyl-carrier-protein] and UDP-N-acetyl-alpha-D-glucosamine: step 1/6. Involved in the biosynthesis of lipid A, a phosphorylated glycolipid that anchors the lipopolysaccharide to the outer membrane of the cell. This is Acyl-[acyl-carrier-protein]--UDP-N-acetylglucosamine O-acyltransferase from Burkholderia ambifaria (strain ATCC BAA-244 / DSM 16087 / CCUG 44356 / LMG 19182 / AMMD) (Burkholderia cepacia (strain AMMD)).